Reading from the N-terminus, the 215-residue chain is Meiotic chromosome segregation protein P8B7.28c (215 aa).

Residues 159-202 (TINSEYADDVSDNTDEERTESKGQQESNSAEEYDDDDSDEDRME) are disordered. 2 stretches are compositionally biased toward acidic residues: residues 164-176 (YADD…DEER) and 187-201 (SAEE…EDRM).

The protein resides in the nucleus. The protein localises to the nucleolus. Required for meiotic chromosome segregation. This chain is Meiotic chromosome segregation protein P8B7.28c, found in Schizosaccharomyces pombe (strain 972 / ATCC 24843) (Fission yeast).